We begin with the raw amino-acid sequence, 536 residues long: Caspase recruitment domain-containing protein 9 (536 aa).

Residue serine 2 is modified to Phosphoserine. Zn(2+) is bound by residues aspartate 3, cysteine 10, and histidine 73. The 93-residue stretch at 6 to 98 (NDDECWSALE…QLYRKVTGKE (93 aa)) folds into the CARD domain. Positions 99 to 116 (PARVFSMIIDASGESGLT) are linker. 2 coiled-coil regions span residues 117–277 (QLLM…HRNS) and 303–420 (SLRK…QLDM). Residue lysine 125 forms a Glycyl lysine isopeptide (Lys-Gly) (interchain with G-Cter in ubiquitin) linkage. Threonine 231 carries the post-translational modification Phosphothreonine. Position 277 is a phosphoserine (serine 277). A phosphoserine mark is found at serine 424, serine 425, serine 431, serine 451, serine 461, serine 483, and serine 498. Positions 425-451 (SDLEDSSPRNSQELSLPQDLEEDAQLS) are disordered. Positions 472-536 (KHLSQTHDTV…GSDNTDTEGS (65 aa)) are disordered. Residues 487–502 (PPEKERRRLKESFENY) are compositionally biased toward basic and acidic residues. Residues threonine 531 and threonine 533 each carry the phosphothreonine; by CK2 modification.

As to quaternary structure, monomer. Homodimer; homodimerization is mediated by the CARD domain which forms an extensive interaction with the adjacent linker and coiled-coil regions; leads to an autoinhibited state. Homomultimer; polymerizes following activation, forming a nucleating helical template that seeds BCL10-filament formation via a CARD-CARD interaction. Interacts (via CARD domain) with BCL10 (via CARD domain); interaction takes place following CARD9 activation and polymerization, leading to the formation of a filamentous CBM complex assembly. Component of a CBM complex (CARD9-BCL10, MALT1), composed of CARD9, BCL10 and MALT1. Interacts with RASGRF1. Interacts with NOD2 (via NACHT domain); interaction is direct. Interacts with RIPK2. Interacts with VHL; without leading to protein degradation. Phosphorylated at Thr-231 by PRKCD downstream of C-type lectin receptors activation: phosphorylation promotes interaction with BCL10, followed by activation of NF-kappa-B and MAP kinase p38 pathways. Phosphorylated at Thr-531 and Thr-533 by CK2 following interaction with VHL, leading to inhibit the ability to activate NF-kappa-B. In terms of processing, ubiquitinated at Lys-125 via 'Lys-27'-linked ubiquitin by TRIM62 downstream of C-type lectin receptors activation; leading to CARD9 activation, followed by activation of NF-kappa-B and MAP kinase p38 pathways. Deubiquitinated at Lys-125 by USP15, inhibiting CARD9.

The protein localises to the cytoplasm. With respect to regulation, maintained in an autoinhibited state via homodimerization in which the CARD domain forms an extensive interaction with the adjacent linker and coiled-coil regions. Activation downstream of C-type lectin receptors, by phosphorylation by PRKCD and/or ubiquitination by TRIM62, triggers disruption of the CARD domain-coiled coil interface, CARD9 homooligomerization and BCL10 recruitment, followed by activation of NF-kappa-B and MAP kinase p38 pathways. Zinc-binding inhibits activation by stabilizing the CARD ground-state conformation and restricting its capacity to form BCL10-nucleating filaments. In terms of biological role, adapter protein that plays a key role in innate immune response against fungi by forming signaling complexes downstream of C-type lectin receptors. CARD9-mediated signals are essential for antifungal immunity against a subset of fungi from the phylum Ascomycota. Transduces signals in myeloid cells downstream of C-type lectin receptors CLEC7A (dectin-1), CLEC6A (dectin-2) and CLEC4E (Mincle), which detect pathogen-associated molecular pattern metabolites (PAMPs), such as fungal carbohydrates, and trigger CARD9 activation. Upon activation, CARD9 homooligomerizes to form a nucleating helical template that recruits BCL10 via CARD-CARD interaction, thereby promoting polymerization of BCL10 and subsequent recruitment of MALT1: this leads to activation of NF-kappa-B and MAP kinase p38 (MAPK11, MAPK12, MAPK13 and/or MAPK14) pathways which stimulate expression of genes encoding pro-inflammatory cytokines and chemokines. CARD9 signaling in antigen-presenting cells links innate sensing of fungi to the activation of adaptive immunity and provides a cytokine milieu that induces the development and subsequent of interleukin 17-producing T helper (Th17) cells. Also involved in activation of myeloid cells via classical ITAM-associated receptors and TLR: required for TLR-mediated activation of MAPK, while it is not required for TLR-induced activation of NF-kappa-B. CARD9 can also be engaged independently of BCL10: forms a complex with RASGRF1 downstream of C-type lectin receptors, which recruits and activates HRAS, leading to ERK activation and the production of cytokines. Acts as an important regulator of the intestinal commensal fungi (mycobiota) component of the gut microbiota. Plays an essential role in antifungal immunity against dissemination of gut fungi: acts by promoting induction of antifungal IgG antibodies response in CX3CR1(+) macrophages to confer protection against disseminated C.albicans or C.auris infection. Also mediates immunity against other pathogens, such as certain bacteria, viruses and parasites; CARD9 signaling is however redundant with other innate immune responses. In response to L.monocytogenes infection, required for the production of inflammatory cytokines activated by intracellular peptidoglycan: acts by connecting NOD2 recognition of peptidoglycan to downstream activation of MAP kinases (MAPK) without activating NF-kappa-B. The sequence is that of Caspase recruitment domain-containing protein 9 from Rattus norvegicus (Rat).